A 444-amino-acid chain; its full sequence is Tubulin beta chain (444 aa).

8 residues coordinate GTP: Gln-11, Glu-69, Ser-138, Gly-142, Thr-143, Gly-144, Asn-204, and Asn-226. Glu-69 provides a ligand contact to Mg(2+). Residues 423–444 are disordered; sequence QQYQDATAEEEGEFDDEEEMDV. Acidic residues predominate over residues 429–444; it reads TAEEEGEFDDEEEMDV.

The protein belongs to the tubulin family. In terms of assembly, dimer of alpha and beta chains. A typical microtubule is a hollow water-filled tube with an outer diameter of 25 nm and an inner diameter of 15 nM. Alpha-beta heterodimers associate head-to-tail to form protofilaments running lengthwise along the microtubule wall with the beta-tubulin subunit facing the microtubule plus end conferring a structural polarity. Microtubules usually have 13 protofilaments but different protofilament numbers can be found in some organisms and specialized cells. Mg(2+) serves as cofactor.

Its subcellular location is the cytoplasm. It is found in the cytoskeleton. Its function is as follows. Tubulin is the major constituent of microtubules, a cylinder consisting of laterally associated linear protofilaments composed of alpha- and beta-tubulin heterodimers. Microtubules grow by the addition of GTP-tubulin dimers to the microtubule end, where a stabilizing cap forms. Below the cap, tubulin dimers are in GDP-bound state, owing to GTPase activity of alpha-tubulin. The polypeptide is Tubulin beta chain (Euplotes focardii).